Here is a 468-residue protein sequence, read N- to C-terminus: TFIIA-alpha and beta-like factor (468 aa).

Disordered stretches follow at residues 215-236 (DRRL…LSLP) and 379-416 (DSVS…SEQD). A compositionally biased stretch (polar residues) spans 380–391 (SVSNEDSTANSS). Residues 401–416 (PEEDPLNSGDDVSEQD) are compositionally biased toward acidic residues.

The protein belongs to the TFIIA subunit 1 family. As to expression, testis specific. Expressed in pachytene spermatocytes and haploid spermatids.

Its subcellular location is the nucleus. Its function is as follows. May function as a testis specific transcription factor. Binds DNA in conjunction with GTF2A2 and TBP (the TATA-binding protein) and together with GTF2A2, allows mRNA transcription. This is TFIIA-alpha and beta-like factor (Gtf2a1l) from Mus musculus (Mouse).